The chain runs to 267 residues: Ribosomal RNA large subunit methyltransferase E (267 aa).

Residues Gly50, Trp52, Asp68, Asp84, and Asp109 each coordinate S-adenosyl-L-methionine. The active-site Proton acceptor is the Lys149. In terms of domain architecture, TRAM spans 196-255 (PLKIDDKFDVTIKKIGAKGNGIAFVEDFVVFMQDEVKKGENVRIKIVDVKPEFAFAIVIG).

This sequence belongs to the class I-like SAM-binding methyltransferase superfamily. RNA methyltransferase RlmE family.

It is found in the cytoplasm. The catalysed reaction is uridine(2552) in 23S rRNA + S-adenosyl-L-methionine = 2'-O-methyluridine(2552) in 23S rRNA + S-adenosyl-L-homocysteine + H(+). Its function is as follows. Specifically methylates the uridine in position 2552 of 23S rRNA at the 2'-O position of the ribose in the fully assembled 50S ribosomal subunit. This is Ribosomal RNA large subunit methyltransferase E from Methanococcoides burtonii (strain DSM 6242 / NBRC 107633 / OCM 468 / ACE-M).